The chain runs to 558 residues: Putative transposase for insertion sequence IS1162 (558 aa).

The region spanning 11–93 (IKECLRLKFE…PDLITIHREL (83 aa)) is the HTH IS408-type domain. The H-T-H motif DNA-binding region spans 23–44 (LSHEKIARALQLSKGVVSKYVT). The 198-residue stretch at 139–336 (QQHRAGEKLF…HPYEVVTFKR (198 aa)) folds into the Integrase catalytic domain. Residues 486-558 (QGLDQQPLPK…AAGQPQPELR (73 aa)) form a disordered region.

This sequence belongs to the transposase IS21/IS408/IS1162 family.

Required for the transposition of the insertion element. This is Putative transposase for insertion sequence IS1162 from Pseudomonas fluorescens.